A 209-amino-acid polypeptide reads, in one-letter code: uncharacterized protein (209 aa).

In terms of domain architecture, Nudix hydrolase spans 1–167; the sequence is MRNSAGLFMI…LNTYASSNYG (167 aa).

This is an uncharacterized protein from Orgyia pseudotsugata (Douglas-fir tussock moth).